A 177-amino-acid chain; its full sequence is Protein LIGHT-DEPENDENT SHORT HYPOCOTYLS 10 (177 aa).

The segment covering 1–10 has biased composition (basic and acidic residues); the sequence is MSSPRERGKS. Disordered stretches follow at residues 1 to 31 and 144 to 177; these read MSSP…SQKR and RGIP…FSFS. Positions 25-152 constitute an ALOG domain; it reads RYESQKRRDW…ARGIPYKKKK (128 aa). The short motif at 150–154 is the Nuclear localization signal element; the sequence is KKKKK. The span at 168–177 shows a compositional bias: low complexity; it reads SSSSSSFSFS.

Belongs to the plant homeotic and developmental regulators ALOG protein family.

Its subcellular location is the nucleus. Functionally, probable transcription regulator that acts as a developmental regulator by promoting cell growth in response to light. The polypeptide is Protein LIGHT-DEPENDENT SHORT HYPOCOTYLS 10 (LSH10) (Arabidopsis thaliana (Mouse-ear cress)).